The chain runs to 176 residues: MNFNINQSSISDAITKTFGNLTINWPFFVFSFLTLILVVTIVTLLVYKPLKKMLKNRQNFIQNNIDESIKAKEAALKVQEEIDEKIIESSKHANQIIEQAKLERERIINNGIEVSNKKAEIIIEQANILVTKSQAEFENKQRKIIVENAVEIAKKIIGREIRDKDNLKMIEEMLES.

The chain crosses the membrane as a helical span at residues 27–47 (FFVFSFLTLILVVTIVTLLVY).

The protein belongs to the ATPase B chain family. F-type ATPases have 2 components, F(1) - the catalytic core - and F(0) - the membrane proton channel. F(1) has five subunits: alpha(3), beta(3), gamma(1), delta(1), epsilon(1). F(0) has three main subunits: a(1), b(2) and c(10-14). The alpha and beta chains form an alternating ring which encloses part of the gamma chain. F(1) is attached to F(0) by a central stalk formed by the gamma and epsilon chains, while a peripheral stalk is formed by the delta and b chains.

Its subcellular location is the cell membrane. F(1)F(0) ATP synthase produces ATP from ADP in the presence of a proton or sodium gradient. F-type ATPases consist of two structural domains, F(1) containing the extramembraneous catalytic core and F(0) containing the membrane proton channel, linked together by a central stalk and a peripheral stalk. During catalysis, ATP synthesis in the catalytic domain of F(1) is coupled via a rotary mechanism of the central stalk subunits to proton translocation. Functionally, component of the F(0) channel, it forms part of the peripheral stalk, linking F(1) to F(0). This chain is ATP synthase subunit b, found in Metamycoplasma arthritidis (strain 158L3-1) (Mycoplasma arthritidis).